The primary structure comprises 118 residues: Putative cytochrome P450 family member 4F30 (118 aa).

The interval 1-64 (MVTPAGCLGG…GPLHILGTDG (64 aa)) is disordered. Residues 28-43 (RAGQTGQAVSGAQVSS) are compositionally biased toward polar residues.

The chain is Putative cytochrome P450 family member 4F30 (CYP4F30P) from Homo sapiens (Human).